The primary structure comprises 460 residues: Argininosuccinate lyase (460 aa).

Belongs to the lyase 1 family. Argininosuccinate lyase subfamily.

Its subcellular location is the cytoplasm. It carries out the reaction 2-(N(omega)-L-arginino)succinate = fumarate + L-arginine. It participates in amino-acid biosynthesis; L-arginine biosynthesis; L-arginine from L-ornithine and carbamoyl phosphate: step 3/3. This is Argininosuccinate lyase from Sulfurimonas denitrificans (strain ATCC 33889 / DSM 1251) (Thiomicrospira denitrificans (strain ATCC 33889 / DSM 1251)).